The sequence spans 358 residues: Diels-Alderase phmD (358 aa).

This sequence belongs to the Diels-Alderase family.

Its pathway is mycotoxin biosynthesis. Its function is as follows. Diels-Alderase; part of the gene cluster that mediates the biosynthesis of the mycotoxins phomacins, leucine-derived cytochalasans with potent actin polymerization-inhibitory activities and monocot-specific antigerminative activities. The first step in the pathway is catalyzed by the hybrid PKS-NRPS phmA, assisted by the enoyl reductase phmE, that are responsible for fusion of the leucine precursor and the polyketide backbone to produce a 2-pyrrolidone intermediate. The polyketide synthase module (PKS) of phmA is responsible for the synthesis of the polyketide backbone and the downstream nonribosomal peptide synthetase (NRPS) amidates the carboxyl end of the polyketide with the leucine precursor. Because phmA lacks a designated enoylreductase (ER) domain, the required activity is provided the enoyl reductase phmE. Reduction by the hydrolyase phmG, followed by dehydration and intra-molecular Diels-Alder cyclization by the Diels-Alderase phmD then yield the required isoindolone-fused macrocycle. A number of oxidative steps catalyzed by the tailoring cytochrome P450 monooxygenase phmB, the FAD-linked oxidoreductase phmC and the short-chain dehydrogenase/reductase phmF, are further required to afford the final products, phomacin D and phomacin E. In Phaeosphaeria nodorum (strain SN15 / ATCC MYA-4574 / FGSC 10173) (Glume blotch fungus), this protein is Diels-Alderase phmD.